The following is a 1217-amino-acid chain: METSSISTVEDKPPQHQVFINFRGADLRRRFVSHLVTALKLNNINVFIDDYEDRGQPLDVLLKRIEESKIVLAIFSGNYTESVWCVRELEKIKDCTDEGTLVAIPIFYKLEPSTVRDLKGKFGDRFRSMAKGDERKKKWKEAFNLIPNIMGIIIDKKSVESEKVNEIVKAVKTALTGIPPEGSHNAVVGALGNSNAGTSSGDKKHETFGNEQRLKDLEEKLDRDKYKGTRIIGVVGMPGIGKTTLLKELYKTWQGKFSRHALIDQIRVKSKHLELDRLPQMLLGELSKLNHPHVDNLKDPYSQLHERKVLVVLDDVSKREQIDALREILDWIKEGKEGSRVVIATSDMSLTNGLVDDTYMVQNLNHRDSLQLFHYHAFIDDQANPQKKDFMKLSEGFVHYARGHPLALKVLGGELNKKSMDHWNSKMKKLAQSPSPNIVSVFQVSYDELTTAQKDAFLDIACFRSQDKDYVESLLASSDLGSAEAMSAVKSLTDKFLINTCDGRVEMHDLLYKFSREVDLKASNQDGSRQRRLWLHQHIIKGGIINVLQNKMKAANVRGIFLDLSEVEDETSLDRDHFINMGNLRYLKFYNSHCPQECKTNNKINIPDKLKLPLKEVRCLHWLKFPLETLPNDFNPINLVDLKLPYSEMEQLWEGDKDTPCLRWVDLNHSSKLCSLSGLSKAEKLQRLNLEGCTTLKAFPHDMKKMKMLAFLNLKGCTSLESLPEMNLISLKTLTLSGCSTFKEFPLISDNIETLYLDGTAISQLPMNMEKLQRLVVLNMKDCKMLEEIPGRVGELKALQELILSDCLNLKIFPEIDISFLNILLLDGTAIEVMPQLPSVQYLCLSRNAKISCLPVGISQLSQLKWLDLKYCTSLTSVPEFPPNLQCLDAHGCSSLKTVSKPLARIMPTEQNHSTFIFTNCENLEQAAKEEITSYAQRKCQLLSYARKRYNGGLVSESLFSTCFPGCEVPSWFCHETVGSELEVKLLPHWHDKKLAGIALCAVVSCLDPQDQVSRLSVTCTFKVKDEDKSWVAYTCPVGSWTRHGGGKDKIELDHVFIGYTSCPHTIKCHEEGNSDECNPTEASLKFTVTGGTSENGKYKVLKCGLSLVYAKDKDKNSALETKYDMLIGKSFQETSEGVDGRVKKTKGKYVMPVEKNFQETTEGVDGRVNKKKKTRMDNGRPKKKQRSGRDDNQTRMQVELQEGNINSVIMHTVKNF.

One can recognise a TIR domain in the interval 14-175; the sequence is PQHQVFINFR…EIVKAVKTAL (162 aa). 23-28 contacts NAD(+); sequence RGADLR. Residues 33–34 form an important for interaction with RRS1 region; it reads SH. Residue Glu88 is part of the active site. Residues 211–472 form the NB-ARC domain; that stretch reads EQRLKDLEEK…FRSQDKDYVE (262 aa). LRR repeat units follow at residues 581–606, 614–636, 637–659, 682–706, 708–728, 729–749, 750–774, 796–818, 819–842, 843–860, and 861–887; these read MGNL…KINI, LKEV…DFNP, INLV…DKDT, AEKL…MKKM, MLAF…EMNL, ISLK…PLIS, DNIE…KLQR, LKAL…EIDI, SFLN…SVQY, LCLS…GISQ, and LSQL…NLQC. Residues 1161 to 1195 form a disordered region; sequence TTEGVDGRVNKKKKTRMDNGRPKKKQRSGRDDNQT. The Nuclear localization signal signature appears at 1170–1177; sequence NKKKKTRM.

It belongs to the disease resistance TIR-NB-LRR family. Interacts with EDS1. Interacts with SRFR1. Interacts with RRS1.

Its subcellular location is the endomembrane system. It is found in the cytoplasm. It localises to the nucleus. The enzyme catalyses NAD(+) + H2O = ADP-D-ribose + nicotinamide + H(+). Functionally, disease resistance (R) protein that specifically recognizes the AvrRps4 type III effector avirulence protein from P.syringae. Resistance proteins guard the plant against pathogens that contain an appropriate avirulence protein via an indirect interaction with this avirulence protein. That triggers a defense system including the hypersensitive response, which restricts the pathogen growth. Probably acts as a NAD(+) hydrolase (NADase): in response to activation, catalyzes cleavage of NAD(+) into ADP-D-ribose (ADPR) and nicotinamide; NAD(+) cleavage triggering a defense system that promotes cell death. The combined presence of both regular and alternative RPS4 transcripts with truncated open reading frames (ORFs) is necessary for function. RPS4 function is regulated at multiple levels, including gene expression, alternative splicing, and protein stability. When over-expressed, confers temperature-conditioned EDS1-dependent auto-immunity. Heterodimerization with RRS1 is required to form a functional complex to recognize AvrRps4 and PopP2. Abscisic acid deficiency enhances nuclear accumulation of RPS4 and its cell death-inducing activity. The protein is Disease resistance protein RPS4 of Arabidopsis thaliana (Mouse-ear cress).